A 377-amino-acid polypeptide reads, in one-letter code: Nitric oxide reductase FlRd-NAD(+) reductase (377 aa).

It belongs to the FAD-dependent oxidoreductase family. It depends on FAD as a cofactor.

It localises to the cytoplasm. The catalysed reaction is 2 reduced [nitric oxide reductase rubredoxin domain] + NAD(+) + H(+) = 2 oxidized [nitric oxide reductase rubredoxin domain] + NADH. Its pathway is nitrogen metabolism; nitric oxide reduction. Its function is as follows. One of at least two accessory proteins for anaerobic nitric oxide (NO) reductase. Reduces the rubredoxin moiety of NO reductase. The sequence is that of Nitric oxide reductase FlRd-NAD(+) reductase from Salmonella typhi.